We begin with the raw amino-acid sequence, 435 residues long: Estrogen-related receptor gamma (435 aa).

Residues 1–64 (MSNKDRHIDS…GLDSPPLYPS (64 aa)) are disordered. A compositionally biased stretch (polar residues) spans 10–29 (SSCSSFIKTEPSSPASLTDS). The span at 34-47 (SPGGSSDASGSYSS) shows a compositional bias: low complexity. Residues 102–177 (KRLCLVCGDI…VGMLKEGVRL (76 aa)) constitute a DNA-binding region (nuclear receptor). 2 NR C4-type zinc fingers span residues 105-125 (CLVC…CEAC) and 141-160 (CPAT…CQAC). The NR LBD domain occupies 210–434 (PYNKIVSHLL…KLFSEMLEAK (225 aa)).

It belongs to the nuclear hormone receptor family. NR3 subfamily. In terms of assembly, homodimer. Interacts with NRIP1, NCOA1 and NCOR2. Binds TLE1, PNRC1 and PNRC2. Binds GRIP1. Post-translationally, acetylated by PCAF/KAT2 (in vitro).

Its subcellular location is the nucleus. Functionally, orphan receptor that acts as a transcription activator in the absence of bound ligand. Binds specifically to an estrogen response element and activates reporter genes controlled by estrogen response elements. Induces the expression of PERM1 in the skeletal muscle. This is Estrogen-related receptor gamma (ESRRG) from Pongo abelii (Sumatran orangutan).